A 192-amino-acid polypeptide reads, in one-letter code: Peptidyl-tRNA hydrolase (192 aa).

Y14 contacts tRNA. H19 (proton acceptor) is an active-site residue. The tRNA site is built by Y64, N66, and N112.

This sequence belongs to the PTH family. As to quaternary structure, monomer.

It localises to the cytoplasm. The enzyme catalyses an N-acyl-L-alpha-aminoacyl-tRNA + H2O = an N-acyl-L-amino acid + a tRNA + H(+). Functionally, hydrolyzes ribosome-free peptidyl-tRNAs (with 1 or more amino acids incorporated), which drop off the ribosome during protein synthesis, or as a result of ribosome stalling. Its function is as follows. Catalyzes the release of premature peptidyl moieties from peptidyl-tRNA molecules trapped in stalled 50S ribosomal subunits, and thus maintains levels of free tRNAs and 50S ribosomes. In Anaeromyxobacter dehalogenans (strain 2CP-C), this protein is Peptidyl-tRNA hydrolase.